Reading from the N-terminus, the 199-residue chain is Chaperone protein TorD (199 aa).

The protein belongs to the TorD/DmsD family. TorD subfamily.

Its subcellular location is the cytoplasm. Involved in the biogenesis of TorA. Acts on TorA before the insertion of the molybdenum cofactor and, as a result, probably favors a conformation of the apoenzyme that is competent for acquiring the cofactor. The protein is Chaperone protein TorD of Escherichia coli O139:H28 (strain E24377A / ETEC).